Consider the following 106-residue polypeptide: MKKNTHLDYKQVLFVDSSTGYKFVCGSTYQSDKTEVFEGQEYPVCYVSVSSSSHPFFTGSKRLVDAEGRVDKFLKRYSNVKPAQPVQVAEEPVAKGKKKPSLKKKK.

A disordered region spans residues 85–106 (PVQVAEEPVAKGKKKPSLKKKK). Basic residues predominate over residues 95–106 (KGKKKPSLKKKK).

Belongs to the bacterial ribosomal protein bL31 family. Type B subfamily. In terms of assembly, part of the 50S ribosomal subunit.

In Chlamydia felis (strain Fe/C-56) (Chlamydophila felis), this protein is Large ribosomal subunit protein bL31B.